The primary structure comprises 250 residues: 5'-nucleotidase SurE (250 aa).

The a divalent metal cation site is built by aspartate 8, aspartate 9, serine 40, and asparagine 94.

It belongs to the SurE nucleotidase family. It depends on a divalent metal cation as a cofactor.

It localises to the cytoplasm. It catalyses the reaction a ribonucleoside 5'-phosphate + H2O = a ribonucleoside + phosphate. Nucleotidase that shows phosphatase activity on nucleoside 5'-monophosphates. The sequence is that of 5'-nucleotidase SurE from Wolbachia sp. subsp. Drosophila simulans (strain wRi).